A 109-amino-acid polypeptide reads, in one-letter code: Large ribosomal subunit protein uL24 (109 aa).

This sequence belongs to the universal ribosomal protein uL24 family. In terms of assembly, part of the 50S ribosomal subunit.

In terms of biological role, one of two assembly initiator proteins, it binds directly to the 5'-end of the 23S rRNA, where it nucleates assembly of the 50S subunit. One of the proteins that surrounds the polypeptide exit tunnel on the outside of the subunit. The chain is Large ribosomal subunit protein uL24 from Mesoplasma florum (strain ATCC 33453 / NBRC 100688 / NCTC 11704 / L1) (Acholeplasma florum).